The sequence spans 159 residues: Large ribosomal subunit protein uL23m (159 aa).

This sequence belongs to the universal ribosomal protein uL23 family. Component of the mitochondrial ribosome large subunit (39S) which comprises a 16S rRNA and about 50 distinct proteins.

Its subcellular location is the mitochondrion. The protein is Large ribosomal subunit protein uL23m (mrpl-23) of Caenorhabditis briggsae.